The chain runs to 216 residues: Peptide methionine sulfoxide reductase MsrA (216 aa).

The active site involves cysteine 54.

This sequence belongs to the MsrA Met sulfoxide reductase family.

It catalyses the reaction L-methionyl-[protein] + [thioredoxin]-disulfide + H2O = L-methionyl-(S)-S-oxide-[protein] + [thioredoxin]-dithiol. It carries out the reaction [thioredoxin]-disulfide + L-methionine + H2O = L-methionine (S)-S-oxide + [thioredoxin]-dithiol. Has an important function as a repair enzyme for proteins that have been inactivated by oxidation. Catalyzes the reversible oxidation-reduction of methionine sulfoxide in proteins to methionine. The polypeptide is Peptide methionine sulfoxide reductase MsrA (Xanthomonas oryzae pv. oryzae (strain PXO99A)).